Reading from the N-terminus, the 804-residue chain is Elongation factor G, mitochondrial (804 aa).

The N-terminal 9 residues, 1-9, are a transit peptide targeting the mitochondrion; that stretch reads MVRPAQVRA. Positions 103–389 constitute a tr-type G domain; sequence SKVRNIGIAA…GVCDYLPNPS (287 aa). GTP is bound by residues 112-119, 187-191, and 241-244; these read AHIDSGKT, DTPGH, and NKMD.

This sequence belongs to the TRAFAC class translation factor GTPase superfamily. Classic translation factor GTPase family. EF-G/EF-2 subfamily.

It localises to the mitochondrion. It functions in the pathway protein biosynthesis; polypeptide chain elongation. Its function is as follows. Mitochondrial GTPase that catalyzes the GTP-dependent ribosomal translocation step during translation elongation. During this step, the ribosome changes from the pre-translocational (PRE) to the post-translocational (POST) state as the newly formed A-site-bound peptidyl-tRNA and P-site-bound deacylated tRNA move to the P and E sites, respectively. Catalyzes the coordinated movement of the two tRNA molecules, the mRNA and conformational changes in the ribosome. The protein is Elongation factor G, mitochondrial (mef1) of Talaromyces stipitatus (strain ATCC 10500 / CBS 375.48 / QM 6759 / NRRL 1006) (Penicillium stipitatum).